Reading from the N-terminus, the 257-residue chain is Uridylate kinase (257 aa).

Residue Lys-8–Gly-11 coordinates ATP. Residues Gly-21–Gly-26 are involved in allosteric activation by GTP. Gly-56 is a binding site for UMP. Residues Gly-57 and Arg-61 each coordinate ATP. UMP is bound by residues Asp-75 and Asn-136–Thr-143. The ATP site is built by Asn-164, Tyr-170, and Asp-173.

Belongs to the UMP kinase family. In terms of assembly, homohexamer.

It is found in the cytoplasm. It catalyses the reaction UMP + ATP = UDP + ADP. It participates in pyrimidine metabolism; CTP biosynthesis via de novo pathway; UDP from UMP (UMPK route): step 1/1. With respect to regulation, allosterically activated by GTP. Inhibited by UTP. Its function is as follows. Catalyzes the reversible phosphorylation of UMP to UDP. The chain is Uridylate kinase from Deinococcus geothermalis (strain DSM 11300 / CIP 105573 / AG-3a).